The following is a 477-amino-acid chain: UDP-galactose-lipid carrier transferase (477 aa).

Helical transmembrane passes span 16–36, 52–72, 93–113, 115–135, 175–195, and 284–304; these read SLALSDLIFFNIALALAIVLI, LDLKIATHILLSVICVGWFWV, TILIFSIVDLSVSALSKWELS, WIWILTWLLSMAMVPFGRACV, VIAFYDVDGSQTALELFGVPV, and FDLVGALSIITLLLPALVILI. At 305–477 the chain is on the cytoplasmic side; that stretch reads FMVSRDGGAP…GVVLKRDGAY (173 aa).

The protein belongs to the bacterial sugar transferase family.

The protein resides in the cell membrane. The protein operates within glycan metabolism; exopolysaccharide biosynthesis. In terms of biological role, involved in the biosynthesis of amylovoran which functions as a virulence factor. May act as a sugar transferase and may be involved in the export of the repeating unit by flipping the lipid carrier to the periplasmic face of the inner membrane. The chain is UDP-galactose-lipid carrier transferase (amsG) from Erwinia amylovora (Fire blight bacteria).